We begin with the raw amino-acid sequence, 1633 residues long: D-lysergyl-peptide-synthetase subunit 3 (1633 aa).

An adenylation (A) domain region spans residues 80–483; sequence FRQRCDLHPD…GRKDSQIKIR (404 aa). The 70-residue stretch at 622–691 folds into the Carrier domain; that stretch reads EEHRLQRMYS…RLKDLARKAS (70 aa). Serine 654 is modified (O-(pantetheine 4'-phosphoryl)serine). The tract at residues 836–1127 is condensation (C) domain; it reads PLVRMKLVEG…ILGQIHGKEA (292 aa). The interval 1256–1483 is reductase (R) domain; it reads VTGASGFIGT…EYNSSAGSEW (228 aa).

Belongs to the NRP synthetase family.

Its pathway is alkaloid biosynthesis; ergot alkaloid biosynthesis. Its function is as follows. D-lysergyl-peptide-synthetase subunit 3; part of the gene cluster that mediates the biosynthesis of fungal ergot alkaloid. DmaW catalyzes the first step of ergot alkaloid biosynthesis by condensing dimethylallyl diphosphate (DMAP) and tryptophan to form 4-dimethylallyl-L-tryptophan. The second step is catalyzed by the methyltransferase easF that methylates 4-dimethylallyl-L-tryptophan in the presence of S-adenosyl-L-methionine, resulting in the formation of 4-dimethylallyl-L-abrine. The catalase easC and the FAD-dependent oxidoreductase easE then transform 4-dimethylallyl-L-abrine to chanoclavine-I which is further oxidized by easD in the presence of NAD(+), resulting in the formation of chanoclavine-I aldehyde. Agroclavine dehydrogenase easG then mediates the conversion of chanoclavine-I aldehyde to agroclavine via a non-enzymatic adduct reaction: the substrate is an iminium intermediate that is formed spontaneously from chanoclavine-I aldehyde in the presence of glutathione. The presence of easA is not required to complete this reaction. Further conversion of agroclavine to paspalic acid is a two-step process involving oxidation of agroclavine to elymoclavine and of elymoclavine to paspalic acid, the second step being performed by the elymoclavine oxidase cloA. Paspalic acid is then further converted to D-lysergic acid. Ergopeptines are assembled from D-lysergic acid and three different amino acids by the D-lysergyl-peptide-synthetases composed each of a monomudular and a trimodular nonribosomal peptide synthetase subunit. LpsB and lpsC encode the monomodular subunits responsible for D-lysergic acid activation and incorporation into the ergopeptine backbone. LpsA1 and A2 subunits encode the trimodular nonribosomal peptide synthetase assembling the tripeptide portion of ergopeptines. LpsA1 is responsible for formation of the major ergopeptine, ergotamine, and lpsA2 for alpha-ergocryptine, the minor ergopeptine of the total alkaloid mixture elaborated by C.purpurea. D-lysergyl-tripeptides are assembled by the nonribosomal peptide synthetases and released as N-(D-lysergyl-aminoacyl)-lactams. Cyclolization of the D-lysergyl-tripeptides is performed by the Fe(2+)/2-ketoglutarate-dependent dioxygenase easH which introduces a hydroxyl group into N-(D-lysergyl-aminoacyl)-lactam at alpha-C of the aminoacyl residue followed by spontaneous condensation with the terminal lactam carbonyl group. This chain is D-lysergyl-peptide-synthetase subunit 3, found in Claviceps purpurea (Ergot fungus).